We begin with the raw amino-acid sequence, 234 residues long: Glucosamine-6-phosphate deaminase (234 aa).

Asp62 acts as the Proton acceptor; for enolization step in catalysis. Asn128 (for ring-opening step) is an active-site residue. His130 functions as the Proton acceptor; for ring-opening step in the catalytic mechanism. Glu135 serves as the catalytic For ring-opening step.

Belongs to the glucosamine/galactosamine-6-phosphate isomerase family. NagB subfamily.

The catalysed reaction is alpha-D-glucosamine 6-phosphate + H2O = beta-D-fructose 6-phosphate + NH4(+). Its pathway is amino-sugar metabolism; N-acetylneuraminate degradation; D-fructose 6-phosphate from N-acetylneuraminate: step 5/5. Its function is as follows. Catalyzes the reversible isomerization-deamination of glucosamine 6-phosphate (GlcN6P) to form fructose 6-phosphate (Fru6P) and ammonium ion. This Ligilactobacillus salivarius (strain UCC118) (Lactobacillus salivarius) protein is Glucosamine-6-phosphate deaminase.